A 71-amino-acid polypeptide reads, in one-letter code: UPF0435 protein BLi00816/BL03111 (71 aa).

Belongs to the UPF0435 family.

In Bacillus licheniformis (strain ATCC 14580 / DSM 13 / JCM 2505 / CCUG 7422 / NBRC 12200 / NCIMB 9375 / NCTC 10341 / NRRL NRS-1264 / Gibson 46), this protein is UPF0435 protein BLi00816/BL03111.